Here is a 740-residue protein sequence, read N- to C-terminus: Ribosomal protein S6 kinase alpha-3 (740 aa).

Residues methionine 1–glutamine 26 are disordered. Residues phenylalanine 68–phenylalanine 327 form the Protein kinase 1 domain. ATP-binding positions include leucine 74 to valine 82 and lysine 100. The active-site Proton acceptor is aspartate 193. Position 227 is a phosphoserine; by PDPK1 (serine 227). The 70-residue stretch at serine 328–glutamine 397 folds into the AGC-kinase C-terminal domain. Threonine 365 is modified (phosphothreonine). 2 positions are modified to phosphoserine: serine 369 and serine 375. Serine 386 carries the post-translational modification Phosphoserine; by autocatalysis and MAPKAPK2. The residue at position 415 (serine 415) is a Phosphoserine. One can recognise a Protein kinase 2 domain in the interval tyrosine 422–isoleucine 679. ATP contacts are provided by residues isoleucine 428 to cysteine 436 and lysine 451. A Phosphotyrosine; by FGFR3 modification is found at tyrosine 529. The active-site Proton acceptor is aspartate 539. Residues serine 556 and serine 715 each carry the phosphoserine modification.

The protein belongs to the protein kinase superfamily. AGC Ser/Thr protein kinase family. S6 kinase subfamily. Forms a complex with either MAPK1/ERK2 or MAPK3/ERK1 in quiescent cells. Transiently dissociates following mitogenic stimulation. Interacts with NFATC4, ETV1/ER81 and FGFR1. Mg(2+) is required as a cofactor. In terms of processing, activated by phosphorylation at Ser-227 by PDPK1. Autophosphorylated on Ser-386, as part of the activation process. May be phosphorylated at Thr-365 and Ser-369 by MAPK1/ERK2 and MAPK3/ERK1. Can also be activated via phosphorylation at Ser-386 by MAPKAPK2. N-terminal myristoylation results in an activated kinase in the absence of added growth factors. As to expression, intestine, thymus, lung, heart and brain.

It localises to the nucleus. Its subcellular location is the cytoplasm. It catalyses the reaction L-seryl-[protein] + ATP = O-phospho-L-seryl-[protein] + ADP + H(+). The enzyme catalyses L-threonyl-[protein] + ATP = O-phospho-L-threonyl-[protein] + ADP + H(+). With respect to regulation, upon extracellular signal or mitogen stimulation, phosphorylated at Thr-577 in the C-terminal kinase domain (CTKD) by MAPK1/ERK2 and MAPK3/ERK1. The activated CTKD then autophosphorylates Ser-386, allowing binding of PDPK1, which in turn phosphorylates Ser-227 in the N-terminal kinase domain (NTDK) leading to the full activation of the protein and subsequent phosphorylation of the substrates by the NTKD. In terms of biological role, serine/threonine-protein kinase that acts downstream of ERK (MAPK1/ERK2 and MAPK3/ERK1) signaling and mediates mitogenic and stress-induced activation of the transcription factors CREB1, ETV1/ER81 and NR4A1/NUR77, regulates translation through RPS6 and EIF4B phosphorylation, and mediates cellular proliferation, survival, and differentiation by modulating mTOR signaling and repressing pro-apoptotic function of BAD and DAPK1. In fibroblast, is required for EGF-stimulated phosphorylation of CREB1 and histone H3 at 'Ser-10', which results in the subsequent transcriptional activation of several immediate-early genes. In response to mitogenic stimulation (EGF and PMA), phosphorylates and activates NR4A1/NUR77 and ETV1/ER81 transcription factors and the cofactor CREBBP. Upon insulin-derived signal, acts indirectly on the transcription regulation of several genes by phosphorylating GSK3B at 'Ser-9' and inhibiting its activity. Phosphorylates RPS6 in response to serum or EGF via an mTOR-independent mechanism and promotes translation initiation by facilitating assembly of the preinitiation complex. In response to insulin, phosphorylates EIF4B, enhancing EIF4B affinity for the EIF3 complex and stimulating cap-dependent translation. Is involved in the mTOR nutrient-sensing pathway by directly phosphorylating TSC2 at 'Ser-1798', which potently inhibits TSC2 ability to suppress mTOR signaling, and mediates phosphorylation of RPTOR, which regulates mTORC1 activity and may promote rapamycin-sensitive signaling independently of the PI3K/AKT pathway. Mediates cell survival by phosphorylating the pro-apoptotic proteins BAD and DAPK1 and suppressing their pro-apoptotic function. Promotes the survival of hepatic stellate cells by phosphorylating CEBPB in response to the hepatotoxin carbon tetrachloride (CCl4). Is involved in cell cycle regulation by phosphorylating the CDK inhibitor CDKN1B, which promotes CDKN1B association with 14-3-3 proteins and prevents its translocation to the nucleus and inhibition of G1 progression. In LPS-stimulated dendritic cells, is involved in TLR4-induced macropinocytosis, and in myeloma cells, acts as effector of FGFR3-mediated transformation signaling, after direct phosphorylation at Tyr-529 by FGFR3. Negatively regulates EGF-induced MAPK1/3 phosphorylation via phosphorylation of SOS1. Phosphorylates SOS1 at 'Ser-1134' and 'Ser-1161' that create YWHAB and YWHAE binding sites and which contribute to the negative regulation of MAPK1/3 phosphorylation. Phosphorylates EPHA2 at 'Ser-897', the RPS6KA-EPHA2 signaling pathway controls cell migration. Acts as a regulator of osteoblast differentiation by mediating phosphorylation of ATF4, thereby promoting ATF4 transactivation activity. The polypeptide is Ribosomal protein S6 kinase alpha-3 (Rps6ka3) (Mus musculus (Mouse)).